The following is a 292-amino-acid chain: 4-diphosphocytidyl-2-C-methyl-D-erythritol kinase (292 aa).

Lys-13 is a catalytic residue. 97–107 is a binding site for ATP; that stretch reads PVAAGLAGGSS. Asp-139 is a catalytic residue.

Belongs to the GHMP kinase family. IspE subfamily.

The enzyme catalyses 4-CDP-2-C-methyl-D-erythritol + ATP = 4-CDP-2-C-methyl-D-erythritol 2-phosphate + ADP + H(+). It participates in isoprenoid biosynthesis; isopentenyl diphosphate biosynthesis via DXP pathway; isopentenyl diphosphate from 1-deoxy-D-xylulose 5-phosphate: step 3/6. In terms of biological role, catalyzes the phosphorylation of the position 2 hydroxy group of 4-diphosphocytidyl-2C-methyl-D-erythritol. This Bacillus thuringiensis (strain Al Hakam) protein is 4-diphosphocytidyl-2-C-methyl-D-erythritol kinase.